We begin with the raw amino-acid sequence, 585 residues long: Epithelial sodium channel subunit gamma (585 aa).

At 1-55 the chain is on the cytoplasmic side; that stretch reads MAPGEKIKAKIKKNLPVTGPQAPTIKELMRWYCLNTNTHGCRRIVVSRGRLRRLL. The helical transmembrane segment at 56-76 threads the bilayer; the sequence is WIGFTLTAVALILWQCALLVF. Residues 77 to 477 lie on the Extracellular side of the membrane; that stretch reads SFYTVSVSIK…GGQLGLWMSC (401 aa). Cystine bridges form between C100-C219, C308-C393, C330-C389, C334-C385, C343-C370, and C345-C359. An N-linked (GlcNAc...) asparagine glycan is attached at N207. N433 is a glycosylation site (N-linked (GlcNAc...) asparagine). The helical transmembrane segment at 478-498 threads the bilayer; the sequence is SVVCVIEIIEVFFIDFFSIIA. Residues 499 to 585 are Cytoplasmic-facing; sequence RRQWQKAKEW…LTDTQMLDEL (87 aa). The interval 513–534 is disordered; that stretch reads QAPPCPEAPRSPQGQDNPALDI. The PY motif; recruits WW domain-containing proteins and is thereby required for ubiquitination and inhibition of the channel by NEDD4 and NEDD4L signature appears at 559–563; that stretch reads PPPKY.

This sequence belongs to the amiloride-sensitive sodium channel (TC 1.A.6) family. SCNN1G subfamily. In terms of assembly, component of the heterotrimeric epithelial sodium channel (ENaC) composed of an alpha/SCNN1A, a beta/SCNN1B and a gamma/SCNN1G subunit. An additional delta/SCNN1D subunit can replace the alpha/SCNN1A subunit to form an alternative channel with specific properties. Interacts with WWP1 (via WW domains). Interacts with WWP2 (via WW domains); inhibits the channel. Interacts with the full-length immature form of PCSK9 (pro-PCSK9); inhibits ENaC by promoting its proteasomal degradation. Interacts with BPIFA1; the interaction is indirect via SCNN1B and inhibits the proteolytic maturation of SCNN1A and SCNN1G and the activation of ENaC. Phosphorylated on serine and threonine residues. Aldosterone and insulin increase the basal level of phosphorylation. Post-translationally, ubiquitinated. Can be ubiquitinated at multiple sites and undergo monoubiquitination and polyubiquitination. Ubiquitination by NEDD4 or NEDD4L inhibits the ENaC channel through endocytosis, intracellular retention and degradation of its individual subunits. In terms of processing, ENaC is activated through the proteolytic maturation of its subunits. Furin cleaves the SCNN1G subunit first, followed by cleavage by prostasin (PRSS8), which results in a stepwise increase in the open probability of the channel due to the release of an inhibitory tract. BPIFA1, which is recruited by the SCNN1B subunit, prevents the proteolytic activation of ENaC. N-glycosylated. N-linked glycans are processed to complex type during ENaC complex assembly and transport to the plasma membrane.

The protein resides in the apical cell membrane. It carries out the reaction Na(+)(in) = Na(+)(out). Its activity is regulated as follows. Originally identified and characterized by its inhibition by the diuretic drug amiloride. Functionally, this is one of the three pore-forming subunits of the heterotrimeric epithelial sodium channel (ENaC), a critical regulator of sodium balance and fluid homeostasis. ENaC operates in epithelial tissues, where it mediates the electrodiffusion of sodium ions from extracellular fluid through the apical membrane of cells, with water following osmotically. It plays a key role in maintaining sodium homeostasis through electrogenic sodium reabsorption in the kidneys. Additionally, ENaC is essential for airway surface liquid homeostasis, which is crucial for proper mucus clearance. The polypeptide is Epithelial sodium channel subunit gamma (Pan troglodytes (Chimpanzee)).